A 137-amino-acid polypeptide reads, in one-letter code: Large ribosomal subunit protein uL16 (137 aa).

This sequence belongs to the universal ribosomal protein uL16 family. Part of the 50S ribosomal subunit.

In terms of biological role, binds 23S rRNA and is also seen to make contacts with the A and possibly P site tRNAs. The sequence is that of Large ribosomal subunit protein uL16 from Ruegeria pomeroyi (strain ATCC 700808 / DSM 15171 / DSS-3) (Silicibacter pomeroyi).